A 551-amino-acid polypeptide reads, in one-letter code: Rqc2 homolog RqcH (551 aa).

The protein belongs to the NEMF family. As to quaternary structure, associates with stalled 50S ribosomal subunits, binds to RqcP. Interacts with human fibronectin.

Its subcellular location is the secreted. It localises to the capsule. The protein resides in the cell surface. The protein localises to the cytoplasm. Functionally, key component of the ribosome quality control system (RQC), a ribosome-associated complex that mediates the extraction of incompletely synthesized nascent chains from stalled ribosomes and their subsequent degradation. RqcH recruits Ala-charged tRNA, and with RqcP directs the elongation of stalled nascent chains on 50S ribosomal subunits, leading to non-templated C-terminal alanine extensions (Ala tail). The Ala tail promotes nascent chain degradation. May add between 1 and at least 8 Ala residues. Binds to stalled 50S ribosomal subunits. Plays a significant role in virulence. Recombinant protein binds to immobilized human fibronectin; binding is saturable and competed by heparin. Purified protein inhibits binding of whole cells to fibronectin. The protein is Rqc2 homolog RqcH of Streptococcus pneumoniae serotype 2 (strain D39 / NCTC 7466).